The chain runs to 194 residues: uncharacterized protein (194 aa).

A signal peptide spans 1–20 (MLYKFTVLLLIYSYLRNLQA). N-linked (GlcNAc...) asparagine; by host glycosylation is found at N31, N72, N133, and N157.

This is an uncharacterized protein from Ostreid herpesvirus 1 (isolate France) (OsHV-1).